The following is a 110-amino-acid chain: Serum amyloid A protein (110 aa).

A disordered region spans residues 73 to 110 (GGSGRGAEDSRADQAANEWGRSGKDPNHFRPHGLPDKY). The segment covering 93–110 (RSGKDPNHFRPHGLPDKY) has biased composition (basic and acidic residues).

This sequence belongs to the SAA family. This protein is the precursor of amyloid protein A, which is formed by the removal of residues from the C-terminal end. Expressed by the liver; secreted in plasma.

Major acute phase reactant. Apolipoprotein of the HDL complex. This is Serum amyloid A protein (SAA1) from Equus caballus (Horse).